The primary structure comprises 353 residues: Photosystem II protein D1 (353 aa).

An N-acetylthreonine modification is found at threonine 2. Threonine 2 carries the post-translational modification Phosphothreonine. The next 3 helical transmembrane spans lie at 29–46 (YIGW…TATS), 118–133 (HFLL…EWEL), and 142–156 (WIAV…AATA). Histidine 118 lines the chlorophyll a pocket. Tyrosine 126 is a binding site for pheophytin a. Positions 170 and 189 each coordinate [CaMn4O5] cluster. The chain crosses the membrane as a helical span at residues 197–218 (FHMLGVAGVFGGSLFSAMHGSL). Histidine 198 provides a ligand contact to chlorophyll a. A quinone-binding positions include histidine 215 and 264–265 (SF). Histidine 215 contacts Fe cation. Histidine 272 contributes to the Fe cation binding site. A helical transmembrane segment spans residues 274 to 288 (FLAAWPVVGIWFTAL). [CaMn4O5] cluster is bound by residues histidine 332, glutamate 333, aspartate 342, and alanine 344. Positions 345–353 (SIEAPLVNG) are excised as a propeptide.

Belongs to the reaction center PufL/M/PsbA/D family. In terms of assembly, PSII is composed of 1 copy each of membrane proteins PsbA, PsbB, PsbC, PsbD, PsbE, PsbF, PsbH, PsbI, PsbJ, PsbK, PsbL, PsbM, PsbT, PsbX, PsbY, PsbZ, Psb30/Ycf12, at least 3 peripheral proteins of the oxygen-evolving complex and a large number of cofactors. It forms dimeric complexes. Requires The D1/D2 heterodimer binds P680, chlorophylls that are the primary electron donor of PSII, and subsequent electron acceptors. It shares a non-heme iron and each subunit binds pheophytin, quinone, additional chlorophylls, carotenoids and lipids. D1 provides most of the ligands for the Mn4-Ca-O5 cluster of the oxygen-evolving complex (OEC). There is also a Cl(-1) ion associated with D1 and D2, which is required for oxygen evolution. The PSII complex binds additional chlorophylls, carotenoids and specific lipids. as cofactor. Post-translationally, tyr-161 forms a radical intermediate that is referred to as redox-active TyrZ, YZ or Y-Z. C-terminally processed by CTPA; processing is essential to allow assembly of the oxygen-evolving complex and thus photosynthetic growth.

It is found in the plastid. The protein localises to the chloroplast thylakoid membrane. It carries out the reaction 2 a plastoquinone + 4 hnu + 2 H2O = 2 a plastoquinol + O2. Its function is as follows. Photosystem II (PSII) is a light-driven water:plastoquinone oxidoreductase that uses light energy to abstract electrons from H(2)O, generating O(2) and a proton gradient subsequently used for ATP formation. It consists of a core antenna complex that captures photons, and an electron transfer chain that converts photonic excitation into a charge separation. The D1/D2 (PsbA/PsbD) reaction center heterodimer binds P680, the primary electron donor of PSII as well as several subsequent electron acceptors. The protein is Photosystem II protein D1 of Psilotum nudum (Whisk fern).